Here is a 249-residue protein sequence, read N- to C-terminus: Homeobox protein TGIF2LX (249 aa).

Positions 1–27 (MEAAADRPAETRSRVEKDSRRAKKDSP) are enriched in basic and acidic residues. Disordered regions lie at residues 1–60 (MEAA…KKKR) and 121–215 (QRRG…EPVS). Residues 28 to 46 (AKTQSPAQDTSIMLRSNAD) are compositionally biased toward polar residues. A DNA-binding region (homeobox; TALE-type) is located at residues 55–118 (EHKKKRKGYL…INARRRILPD (64 aa)). Residues 159–172 (DNVQSLPLRSSPKG) show a composition bias toward polar residues. Low complexity predominate over residues 202–215 (VSNITSSSSPEPVS).

Belongs to the TALE/TGIF homeobox family.

It is found in the nucleus. Its function is as follows. May have a transcription role in testis. The protein is Homeobox protein TGIF2LX (TGIF2LX) of Miopithecus talapoin (Angolan talapoin).